The following is a 543-amino-acid chain: Chaperonin GroEL 2 (543 aa).

ATP contacts are provided by residues 29–32 (TLGP), 86–90 (DGTTT), Gly-413, 477–479 (DAA), and Asp-493. The segment at 523-543 (PQEPEPAAGGHGHGHQHGPGF) is disordered. Positions 534-543 (GHGHQHGPGF) are enriched in basic residues.

Belongs to the chaperonin (HSP60) family. In terms of assembly, forms a cylinder of 14 subunits composed of two heptameric rings stacked back-to-back. Interacts with the co-chaperonin GroES.

Its subcellular location is the cytoplasm. It catalyses the reaction ATP + H2O + a folded polypeptide = ADP + phosphate + an unfolded polypeptide.. Together with its co-chaperonin GroES, plays an essential role in assisting protein folding. The GroEL-GroES system forms a nano-cage that allows encapsulation of the non-native substrate proteins and provides a physical environment optimized to promote and accelerate protein folding. This is Chaperonin GroEL 2 from Salinispora tropica (strain ATCC BAA-916 / DSM 44818 / JCM 13857 / NBRC 105044 / CNB-440).